Reading from the N-terminus, the 430-residue chain is Adenylosuccinate synthetase (430 aa).

GTP-binding positions include 12 to 18 and 40 to 42; these read GDEGKGK and GHT. The Proton acceptor role is filled by Asp13. Residues Asp13 and Gly40 each contribute to the Mg(2+) site. IMP contacts are provided by residues 13 to 16, 38 to 41, Thr130, Arg144, Gln225, Thr240, and Arg304; these read DEGK and NAGH. Residue His41 is the Proton donor of the active site. Substrate is bound at residue 300 to 306; it reads ATTGRPR. GTP contacts are provided by residues Arg306, 332–334, and 414–416; these read KLD and SIG.

It belongs to the adenylosuccinate synthetase family. Homodimer. Mg(2+) is required as a cofactor.

It is found in the cytoplasm. The catalysed reaction is IMP + L-aspartate + GTP = N(6)-(1,2-dicarboxyethyl)-AMP + GDP + phosphate + 2 H(+). Its pathway is purine metabolism; AMP biosynthesis via de novo pathway; AMP from IMP: step 1/2. Plays an important role in the de novo pathway of purine nucleotide biosynthesis. Catalyzes the first committed step in the biosynthesis of AMP from IMP. The sequence is that of Adenylosuccinate synthetase from Geobacter metallireducens (strain ATCC 53774 / DSM 7210 / GS-15).